Consider the following 67-residue polypeptide: Mitotic-spindle organizing protein 1A (67 aa).

Belongs to the MOZART1 family. Part of the gamma-tubulin complex. Interacts with GIP1 and GCP3. As to expression, mostly expressed in siliques and flowers, and, to a lower extent, in leaves, roots and seedlings, with highest levels in young tissues, meristematic cells, and the vasculature.

The protein localises to the cytoplasm. It is found in the cytoskeleton. Its subcellular location is the microtubule organizing center. The protein resides in the spindle. It localises to the nucleus. The protein localises to the phragmoplast. It is found in the nucleus envelope. Its function is as follows. Required for gamma-tubulin complex recruitment to the microtubule organizing centers (MTOCs). During mitosis, modulates gamma-tubulin complex localization, spindle stability and chromosomal segregation. Necessary for gametophyte development and embryogenesis. This chain is Mitotic-spindle organizing protein 1A (GIP2), found in Arabidopsis thaliana (Mouse-ear cress).